A 351-amino-acid polypeptide reads, in one-letter code: Nicotinate-nucleotide--dimethylbenzimidazole phosphoribosyltransferase (351 aa).

The active-site Proton acceptor is the Glu317.

This sequence belongs to the CobT family.

The enzyme catalyses 5,6-dimethylbenzimidazole + nicotinate beta-D-ribonucleotide = alpha-ribazole 5'-phosphate + nicotinate + H(+). It participates in nucleoside biosynthesis; alpha-ribazole biosynthesis; alpha-ribazole from 5,6-dimethylbenzimidazole: step 1/2. Catalyzes the synthesis of alpha-ribazole-5'-phosphate from nicotinate mononucleotide (NAMN) and 5,6-dimethylbenzimidazole (DMB). The chain is Nicotinate-nucleotide--dimethylbenzimidazole phosphoribosyltransferase from Pseudomonas aeruginosa (strain LESB58).